A 493-amino-acid chain; its full sequence is Ribulose bisphosphate carboxylase large chain (493 aa).

Substrate is bound at residue N132. C181 is modified (S-nitrosocysteine). Residue T182 participates in substrate binding. The active-site Proton acceptor is K184. K186 contacts substrate. Residues K210, D212, and E213 each coordinate Mg(2+). K210 bears the N6-carboxylysine mark. H302 (proton acceptor) is an active-site residue. Residues R303, H335, and S387 each contribute to the substrate site. Residue C460 is modified to S-nitrosocysteine.

It belongs to the RuBisCO large chain family. Type I subfamily. As to quaternary structure, heterohexadecamer of 8 large chains and 8 small chains. The cofactor is Mg(2+).

Its subcellular location is the plastid. The protein localises to the chloroplast. The enzyme catalyses 2 (2R)-3-phosphoglycerate + 2 H(+) = D-ribulose 1,5-bisphosphate + CO2 + H2O. It carries out the reaction D-ribulose 1,5-bisphosphate + O2 = 2-phosphoglycolate + (2R)-3-phosphoglycerate + 2 H(+). In terms of biological role, ruBisCO catalyzes two reactions: the carboxylation of D-ribulose 1,5-bisphosphate, the primary event in carbon dioxide fixation, as well as the oxidative fragmentation of the pentose substrate in the photorespiration process. Both reactions occur simultaneously and in competition at the same active site. Carbon dioxide and oxygen bind in the same pocket of the enzyme in a similar manner. In Galdieria sulphuraria (Red alga), this protein is Ribulose bisphosphate carboxylase large chain.